The chain runs to 117 residues: UPF0342 protein BLi01058/BL02870 (117 aa).

This sequence belongs to the UPF0342 family.

This chain is UPF0342 protein BLi01058/BL02870, found in Bacillus licheniformis (strain ATCC 14580 / DSM 13 / JCM 2505 / CCUG 7422 / NBRC 12200 / NCIMB 9375 / NCTC 10341 / NRRL NRS-1264 / Gibson 46).